A 486-amino-acid polypeptide reads, in one-letter code: Glutamyl-tRNA(Gln) amidotransferase subunit A (486 aa).

Catalysis depends on charge relay system residues lysine 78 and serine 153. The Acyl-ester intermediate role is filled by serine 177.

It belongs to the amidase family. GatA subfamily. In terms of assembly, heterotrimer of A, B and C subunits.

The enzyme catalyses L-glutamyl-tRNA(Gln) + L-glutamine + ATP + H2O = L-glutaminyl-tRNA(Gln) + L-glutamate + ADP + phosphate + H(+). Functionally, allows the formation of correctly charged Gln-tRNA(Gln) through the transamidation of misacylated Glu-tRNA(Gln) in organisms which lack glutaminyl-tRNA synthetase. The reaction takes place in the presence of glutamine and ATP through an activated gamma-phospho-Glu-tRNA(Gln). In Ruminiclostridium cellulolyticum (strain ATCC 35319 / DSM 5812 / JCM 6584 / H10) (Clostridium cellulolyticum), this protein is Glutamyl-tRNA(Gln) amidotransferase subunit A.